A 249-amino-acid chain; its full sequence is Proteasome activator complex subunit 1 (249 aa).

The interval 60–102 is disordered; that stretch reads PLDIPVPDPVKEKEKEERKKQQEKEDKDEKKKGEDEDKGPPCG. The segment covering 68–98 has biased composition (basic and acidic residues); sequence PVKEKEKEERKKQQEKEDKDEKKKGEDEDKG.

Belongs to the PA28 family. In terms of assembly, heterodimer of PSME1 and PSME2, which forms a hexameric ring. PSME1 can form homoheptamers.

In terms of biological role, implicated in immunoproteasome assembly and required for efficient antigen processing. The PA28 activator complex enhances the generation of class I binding peptides by altering the cleavage pattern of the proteasome. In Sus scrofa (Pig), this protein is Proteasome activator complex subunit 1 (PSME1).